The following is a 284-amino-acid chain: Bifunctional protein FolD (284 aa).

Residues 165-167 (GRS), Ser-190, and Val-231 each bind NADP(+).

This sequence belongs to the tetrahydrofolate dehydrogenase/cyclohydrolase family. In terms of assembly, homodimer.

It catalyses the reaction (6R)-5,10-methylene-5,6,7,8-tetrahydrofolate + NADP(+) = (6R)-5,10-methenyltetrahydrofolate + NADPH. It carries out the reaction (6R)-5,10-methenyltetrahydrofolate + H2O = (6R)-10-formyltetrahydrofolate + H(+). It participates in one-carbon metabolism; tetrahydrofolate interconversion. Functionally, catalyzes the oxidation of 5,10-methylenetetrahydrofolate to 5,10-methenyltetrahydrofolate and then the hydrolysis of 5,10-methenyltetrahydrofolate to 10-formyltetrahydrofolate. This Geobacillus kaustophilus (strain HTA426) protein is Bifunctional protein FolD.